Consider the following 692-residue polypeptide: Elongation factor G (692 aa).

The tr-type G domain occupies A8–L282. GTP is bound by residues A17–T24, D81–H85, and N135–D138.

The protein belongs to the TRAFAC class translation factor GTPase superfamily. Classic translation factor GTPase family. EF-G/EF-2 subfamily.

It localises to the cytoplasm. Functionally, catalyzes the GTP-dependent ribosomal translocation step during translation elongation. During this step, the ribosome changes from the pre-translocational (PRE) to the post-translocational (POST) state as the newly formed A-site-bound peptidyl-tRNA and P-site-bound deacylated tRNA move to the P and E sites, respectively. Catalyzes the coordinated movement of the two tRNA molecules, the mRNA and conformational changes in the ribosome. The polypeptide is Elongation factor G (Streptococcus uberis (strain ATCC BAA-854 / 0140J)).